The following is a 293-amino-acid chain: Pyridoxal 5'-phosphate synthase subunit PdxS (293 aa).

Residue aspartate 23 participates in D-ribose 5-phosphate binding. Residue lysine 80 is the Schiff-base intermediate with D-ribose 5-phosphate of the active site. Glycine 152 serves as a coordination point for D-ribose 5-phosphate. Arginine 164 lines the D-glyceraldehyde 3-phosphate pocket. D-ribose 5-phosphate is bound by residues glycine 213 and 234–235; that span reads GS.

Belongs to the PdxS/SNZ family. In terms of assembly, in the presence of PdxT, forms a dodecamer of heterodimers.

It carries out the reaction aldehydo-D-ribose 5-phosphate + D-glyceraldehyde 3-phosphate + L-glutamine = pyridoxal 5'-phosphate + L-glutamate + phosphate + 3 H2O + H(+). Its pathway is cofactor biosynthesis; pyridoxal 5'-phosphate biosynthesis. Functionally, catalyzes the formation of pyridoxal 5'-phosphate from ribose 5-phosphate (RBP), glyceraldehyde 3-phosphate (G3P) and ammonia. The ammonia is provided by the PdxT subunit. Can also use ribulose 5-phosphate and dihydroxyacetone phosphate as substrates, resulting from enzyme-catalyzed isomerization of RBP and G3P, respectively. This Roseiflexus castenholzii (strain DSM 13941 / HLO8) protein is Pyridoxal 5'-phosphate synthase subunit PdxS.